The chain runs to 120 residues: MAKYRAGRINEEVKKEVSNIIHNDIKDPRLSAMVSVTDVNVTKDLKYAKVYVSIFGNEKAKEESLQALKSSVGFIRKEVGRRVKLRNTPEVIIEVDNSIERGMHIDELLHSIKENESNDN.

Belongs to the RbfA family. Monomer. Binds 30S ribosomal subunits, but not 50S ribosomal subunits or 70S ribosomes.

The protein resides in the cytoplasm. One of several proteins that assist in the late maturation steps of the functional core of the 30S ribosomal subunit. Associates with free 30S ribosomal subunits (but not with 30S subunits that are part of 70S ribosomes or polysomes). Required for efficient processing of 16S rRNA. May interact with the 5'-terminal helix region of 16S rRNA. This chain is Ribosome-binding factor A, found in Clostridium botulinum (strain 657 / Type Ba4).